The chain runs to 915 residues: Phototropin-2 (915 aa).

Residues 1–10 (MERPRAPPSP) are compositionally biased toward pro residues. Disordered stretches follow at residues 1–62 (MERP…EFQD) and 84–118 (DDGISFKLSSEVERSKNMSRRSSEESTSSESGAFP). 2 positions are modified to phosphoserine: Ser-9 and Ser-22. A compositionally biased stretch (polar residues) spans 27 to 43 (NPSSGKETHGSTSSSSK). Basic and acidic residues predominate over residues 93-107 (SEVERSKNMSRRSSE). A PAS 1 domain is found at 120–193 (VSQELKTALS…AKIRDCVKNG (74 aa)). Ser-121 carries the phosphoserine modification. Asn-169 contributes to the FMN binding site. S-4a-FMN cysteine is present on Cys-170. The FMN site is built by Arg-171, Gln-174, Arg-187, Asn-202, Asn-212, Gln-233, and Lys-238. One can recognise a PAC 1 domain in the interval 194–248 (KSYCGRLLNYKKDGTPFWNLLTVTPIKDDQGNTIKFIGMQVEVSKYTEGVNDKAL). The interval 281–344 (HRKSQVQESV…KSSNNRHEDL (64 aa)) is disordered. Polar residues-rich tracts occupy residues 286–310 (VQESVSNDTMVKPDSSTTPTPGRQT) and 325–337 (RVSTPTGSKLKSS). Position 364 is a phosphoserine (Ser-364). Residues 376–449 (QGIDLATTLE…QKIRDAIRDQ (74 aa)) enclose the PAS 2 domain. Residue Asn-425 coordinates FMN. Cys-426 carries the post-translational modification S-4a-FMN cysteine. The FMN site is built by Arg-427, Gln-430, Arg-443, Asn-458, Asn-468, Phe-470, and Gln-489. One can recognise a PAC 2 domain in the interval 450–504 (REITVQLINYTKSGKKFWNLFHLQPMRDQKGELQYFIGVQLDGSDHVEPLQNRLS). The Protein kinase domain maps to 577–864 (FKPIKPLGSG…ANEIKQHAFF (288 aa)). Residues 583 to 591 (LGSGDTGSV) and Lys-606 contribute to the ATP site. Asp-702 (proton acceptor) is an active-site residue. The activation loop stretch occupies residues 720–774 (DFDLSFMTTCTPQLIIPAAPSKRRRSKSQPLPTFVAEPSTQSNSFVGTEEYIAPE).

The protein belongs to the protein kinase superfamily. AGC Ser/Thr protein kinase family. In terms of assembly, homodimer. Interacts with PKS1, PKS2, RPT3 and PHOT1. Associates with CBC1 and CBC2. Binds to BHP. The cofactor is FMN. Post-translationally, autophosphorylated in response to blue light irradiation. In terms of processing, 2 molecules of FMN bind covalently to cysteines after exposure to blue light and are reversed in the dark. In terms of tissue distribution, expressed in leaves, stems and flowers, and to a lower extent in roots. Present in guard cells (at protein level).

Its subcellular location is the cell membrane. It catalyses the reaction L-seryl-[protein] + ATP = O-phospho-L-seryl-[protein] + ADP + H(+). It carries out the reaction L-threonyl-[protein] + ATP = O-phospho-L-threonyl-[protein] + ADP + H(+). Its activity is regulated as follows. Autophosphorylation is inhibited by staurosporine, but not by tyrphostin 9, sphingosine, GW5074 and BML-265. Protein kinase that acts as a blue light photoreceptor in a signal-transduction pathway for photo-induced movements. Triggers the phosphorylation of AHA1 and AHA2 C-terminal penultimate Thr in guard cells to activate them and induce stomatal opening in response to blue light (BL). Also phosphorylates BLUS1, a kinase involved in stomatal opening. Mediates calcium spiking of extra- and intracellular origins in response to blue light. Involved in hypocotyl phototropism. Contributes to the chloroplast accumulation in low blue light and mediates their translocation (avoidance response) at high fluence. Regulates stomata opening and photomorphogenesis response of leaf tissue. Not involved in hypocotyl elongation inhibition, anthocyanin accumulation or cotyledon opening. In Arabidopsis thaliana (Mouse-ear cress), this protein is Phototropin-2.